We begin with the raw amino-acid sequence, 429 residues long: Type II methyltransferase M.AgeI (429 aa).

Positions 1 to 429 (MKTIDLFCGA…MAETIKVAIS (429 aa)) constitute an SAM-dependent MTase C5-type domain. Residue cysteine 80 is part of the active site.

Belongs to the class I-like SAM-binding methyltransferase superfamily. C5-methyltransferase family.

It catalyses the reaction a 2'-deoxycytidine in DNA + S-adenosyl-L-methionine = a 5-methyl-2'-deoxycytidine in DNA + S-adenosyl-L-homocysteine + H(+). Functionally, a methylase, recognizes the double-stranded sequence 5'-ACCGGT-3', methylates C-3 on both strands, and protects the DNA from cleavage by the AgeI endonuclease. The polypeptide is Type II methyltransferase M.AgeI (ageIM) (Thalassovita gelatinovora (Thalassobius gelatinovorus)).